The primary structure comprises 313 residues: Uracil-DNA glycosylase (313 aa).

Residues 35–68 (DEPMPKKCRRPAGPPKGFISTRGDTSPSSDNNHI) form a disordered region. Residues 56–68 (RGDTSPSSDNNHI) are compositionally biased toward polar residues. Asp153 functions as the Proton acceptor in the catalytic mechanism.

This sequence belongs to the uracil-DNA glycosylase (UDG) superfamily. UNG family.

The protein resides in the host nucleus. It catalyses the reaction Hydrolyzes single-stranded DNA or mismatched double-stranded DNA and polynucleotides, releasing free uracil.. In terms of biological role, excises uracil residues from the DNA which can arise as a result of misincorporation of dUMP residues by DNA polymerase or deamination of cytosines. Therefore may reduce deleterious uracil incorporation into the viral genome, particularly in terminally differentiated cells which lack DNA repair enzymes. This Gallus gallus (Chicken) protein is Uracil-DNA glycosylase (MDV014).